Consider the following 91-residue polypeptide: Cell division topological specificity factor (91 aa).

Belongs to the MinE family.

In terms of biological role, prevents the cell division inhibition by proteins MinC and MinD at internal division sites while permitting inhibition at polar sites. This ensures cell division at the proper site by restricting the formation of a division septum at the midpoint of the long axis of the cell. This Bradyrhizobium diazoefficiens (strain JCM 10833 / BCRC 13528 / IAM 13628 / NBRC 14792 / USDA 110) protein is Cell division topological specificity factor.